The sequence spans 480 residues: ATP synthase subunit beta, chloroplastic (480 aa).

Position 161 to 168 (161 to 168 (GGAGVGKT)) interacts with ATP.

This sequence belongs to the ATPase alpha/beta chains family. F-type ATPases have 2 components, CF(1) - the catalytic core - and CF(0) - the membrane proton channel. CF(1) has five subunits: alpha(3), beta(3), gamma(1), delta(1), epsilon(1). CF(0) has four main subunits: a(1), b(1), b'(1) and c(9-12).

Its subcellular location is the plastid. The protein localises to the chloroplast thylakoid membrane. The catalysed reaction is ATP + H2O + 4 H(+)(in) = ADP + phosphate + 5 H(+)(out). Its function is as follows. Produces ATP from ADP in the presence of a proton gradient across the membrane. The catalytic sites are hosted primarily by the beta subunits. The sequence is that of ATP synthase subunit beta, chloroplastic from Euglena gracilis.